A 651-amino-acid chain; its full sequence is Epithelial sodium channel subunit beta (651 aa).

Over 1 to 50 (MFLKRWFIRALHRLQKGPGYGYSELFVWYCNNTNTHGPKRLIIEGPKKKT) the chain is Cytoplasmic. A helical transmembrane segment spans residues 51–71 (LWSLFTVTFACLVFWQWGLLI). Topologically, residues 72–541 (QTYLSWGVSV…GGQFGFWMGG (470 aa)) are extracellular. 8 disulfide bridges follow: Cys98–Cys281, Cys205–Cys212, Cys258–Cys265, Cys370–Cys457, Cys395–Cys453, Cys399–Cys449, Cys408–Cys435, and Cys410–Cys424. Residues 542–562 (SVLCIIEFGEVFIDCIWIAVI) form a helical membrane-spanning segment. Over 563-651 (RFVKWYKNRK…TEHHSDSEDL (89 aa)) the chain is Cytoplasmic. The disordered stretch occupies residues 612–651 (QPPDLYLPTTLEIPGTPPPKYDSLRVHPIDTEHHSDSEDL). Over residues 633–651 (DSLRVHPIDTEHHSDSEDL) the composition is skewed to basic and acidic residues.

It belongs to the amiloride-sensitive sodium channel (TC 1.A.6) family. SCNN1B subfamily. In terms of assembly, component of the heterotrimeric epithelial sodium channel (ENaC) composed of an alpha/SCNN1A, a beta/SCNN1B and a gamma/SCNN1G subunit. As to expression, strongly expressed in gill, kidney and rectum and more weakly in brain, eye, liver and muscle.

Its subcellular location is the apical cell membrane. It is found in the cytoplasmic vesicle membrane. It carries out the reaction Na(+)(in) = Na(+)(out). Its activity is regulated as follows. Originally identified and characterized by its inhibition by the diuretic drug amiloride. This is one of the three pore-forming subunits of the heterotrimeric epithelial sodium channel (ENaC), a critical regulator of sodium balance and fluid homeostasis. ENaC operates in epithelial tissues, where it mediates the electrodiffusion of sodium ions from extracellular fluid through the apical membrane of cells, with water following osmotically. The protein is Epithelial sodium channel subunit beta of Neoceratodus forsteri (Australian lungfish).